Here is a 437-residue protein sequence, read N- to C-terminus: Tryptophan--tRNA ligase (437 aa).

The 'HIGH' region motif lies at 74–82 (PSGKVHLGH). The short motif at 321-325 (KMSSS) is the 'KMSKS' region element.

Belongs to the class-I aminoacyl-tRNA synthetase family.

It is found in the cytoplasm. The enzyme catalyses tRNA(Trp) + L-tryptophan + ATP = L-tryptophyl-tRNA(Trp) + AMP + diphosphate + H(+). In Methanosarcina acetivorans (strain ATCC 35395 / DSM 2834 / JCM 12185 / C2A), this protein is Tryptophan--tRNA ligase.